The following is a 518-amino-acid chain: Glucose-6-phosphate 1-dehydrogenase (518 aa).

Residues 36–43, arginine 70, and lysine 169 contribute to the NADP(+) site; that span reads GASGDLAK. D-glucose 6-phosphate is bound by residues lysine 169, 199–203, glutamate 237, and aspartate 256; that span reads HYLGK. The Proton acceptor role is filled by histidine 261. Position 356 (arginine 356) interacts with NADP(+). D-glucose 6-phosphate contacts are provided by lysine 359 and arginine 364. Residues lysine 365, arginine 369, and arginine 392 each coordinate NADP(+). Residue glutamine 394 participates in D-glucose 6-phosphate binding. NADP(+) contacts are provided by residues 400-402, 420-422, arginine 486, tyrosine 502, and tryptophan 508; these read YFK and DLT.

Belongs to the glucose-6-phosphate dehydrogenase family.

The protein localises to the cytoplasm. It is found in the cytosol. It carries out the reaction D-glucose 6-phosphate + NADP(+) = 6-phospho-D-glucono-1,5-lactone + NADPH + H(+). It functions in the pathway carbohydrate degradation; pentose phosphate pathway; D-ribulose 5-phosphate from D-glucose 6-phosphate (oxidative stage): step 1/3. Its function is as follows. Cytosolic glucose-6-phosphate dehydrogenase that catalyzes the first and rate-limiting step of the oxidative branch within the pentose phosphate pathway/shunt, an alternative route to glycolysis for the dissimilation of carbohydrates and a major source of reducing power and metabolic intermediates for fatty acid and nucleic acid biosynthetic processes. The sequence is that of Glucose-6-phosphate 1-dehydrogenase (Zw) from Drosophila yakuba (Fruit fly).